The primary structure comprises 173 residues: UPF0598 protein F59C6.12 (173 aa).

Belongs to the UPF0598 family.

The sequence is that of UPF0598 protein F59C6.12 from Caenorhabditis elegans.